Consider the following 104-residue polypeptide: Urease subunit beta (104 aa).

The protein belongs to the urease beta subunit family. As to quaternary structure, heterotrimer of UreA (gamma), UreB (beta) and UreC (alpha) subunits. Three heterotrimers associate to form the active enzyme.

The protein resides in the cytoplasm. The enzyme catalyses urea + 2 H2O + H(+) = hydrogencarbonate + 2 NH4(+). The protein operates within nitrogen metabolism; urea degradation; CO(2) and NH(3) from urea (urease route): step 1/1. The sequence is that of Urease subunit beta from Mycolicibacterium vanbaalenii (strain DSM 7251 / JCM 13017 / BCRC 16820 / KCTC 9966 / NRRL B-24157 / PYR-1) (Mycobacterium vanbaalenii).